A 69-amino-acid polypeptide reads, in one-letter code: Small, acid-soluble spore protein C4 (69 aa).

Belongs to the alpha/beta-type SASP family.

In terms of biological role, SASP are bound to spore DNA. They are double-stranded DNA-binding proteins that cause DNA to change to an a-like conformation. They protect the DNA backbone from chemical and enzymatic cleavage and are thus involved in dormant spore's high resistance to UV light. This chain is Small, acid-soluble spore protein C4 (SASP-C4), found in Priestia megaterium (Bacillus megaterium).